A 320-amino-acid polypeptide reads, in one-letter code: Aurora kinase B (320 aa).

The span at 1–10 (MQNKENREPR) shows a compositional bias: basic and acidic residues. The interval 1 to 38 (MQNKENREPRVQQTPSAGVGPLRVEMNPDTHAVSGPGR) is disordered. Residues 53–303 (FDIGRPLGKG…LRSVMEHPWV (251 aa)) form the Protein kinase domain. ATP is bound by residues 59 to 67 (LGKGKFGNV) and Lys82. Asp176 (proton acceptor) is an active-site residue.

The protein belongs to the protein kinase superfamily. Ser/Thr protein kinase family. Aurora subfamily. In terms of assembly, component of the chromosomal passenger complex (CPC).

Its subcellular location is the nucleus. The protein resides in the chromosome. The protein localises to the centromere. It localises to the cytoplasm. It is found in the cytoskeleton. Its subcellular location is the spindle. The protein resides in the midbody. The catalysed reaction is L-seryl-[protein] + ATP = O-phospho-L-seryl-[protein] + ADP + H(+). It carries out the reaction L-threonyl-[protein] + ATP = O-phospho-L-threonyl-[protein] + ADP + H(+). Its activity is regulated as follows. Kinase activity is stimulated by cell-cycle specific phosphorylation. Its function is as follows. Serine/threonine-protein kinase component of the chromosomal passenger complex (CPC), a complex that acts as a key regulator of mitosis. The CPC complex has essential functions at the centromere in ensuring correct chromosome alignment and segregation and is required for chromatin-induced microtubule stabilization and spindle assembly. Involved in the bipolar attachment of spindle microtubules to kinetochores and is a key regulator for the onset of cytokinesis during mitosis. Required for central/midzone spindle assembly and cleavage furrow formation. Key component of the cytokinesis checkpoint, a process required to delay abscission to prevent both premature resolution of intercellular chromosome bridges and accumulation of DNA damage. Phosphorylates 'Ser-10' of histone H3 during mitosis. This Danio rerio (Zebrafish) protein is Aurora kinase B (aurkb).